A 409-amino-acid chain; its full sequence is Serine hydroxymethyltransferase (409 aa).

(6S)-5,6,7,8-tetrahydrofolate-binding positions include Leu-116 and 120 to 122 (GHL). Lys-225 carries the N6-(pyridoxal phosphate)lysine modification.

The protein belongs to the SHMT family. Homodimer. Pyridoxal 5'-phosphate is required as a cofactor.

The protein localises to the cytoplasm. The catalysed reaction is (6R)-5,10-methylene-5,6,7,8-tetrahydrofolate + glycine + H2O = (6S)-5,6,7,8-tetrahydrofolate + L-serine. It participates in one-carbon metabolism; tetrahydrofolate interconversion. Its pathway is amino-acid biosynthesis; glycine biosynthesis; glycine from L-serine: step 1/1. In terms of biological role, catalyzes the reversible interconversion of serine and glycine with tetrahydrofolate (THF) serving as the one-carbon carrier. This reaction serves as the major source of one-carbon groups required for the biosynthesis of purines, thymidylate, methionine, and other important biomolecules. Also exhibits THF-independent aldolase activity toward beta-hydroxyamino acids, producing glycine and aldehydes, via a retro-aldol mechanism. In Acholeplasma laidlawii (strain PG-8A), this protein is Serine hydroxymethyltransferase.